The primary structure comprises 112 residues: Small ribosomal subunit protein uS17 (112 aa).

The protein belongs to the universal ribosomal protein uS17 family. Part of the 30S ribosomal subunit.

Its function is as follows. One of the primary rRNA binding proteins, it binds specifically to the 5'-end of 16S ribosomal RNA. The protein is Small ribosomal subunit protein uS17 of Thermotoga neapolitana (strain ATCC 49049 / DSM 4359 / NBRC 107923 / NS-E).